Consider the following 426-residue polypeptide: Adenylosuccinate synthetase (426 aa).

Residues 18–24 (GDEGKGK) and 46–48 (GHT) contribute to the GTP site. Asp19 acts as the Proton acceptor in catalysis. Asp19 and Gly46 together coordinate Mg(2+). IMP-binding positions include 19 to 22 (DEGK), 44 to 47 (NAGH), Thr136, Arg150, Gln222, Thr237, and Arg301. The Proton donor role is filled by His47. 297–303 (VTTKRKR) contributes to the substrate binding site. Residues Arg303, 329 to 331 (KID), and 413 to 415 (GTG) contribute to the GTP site.

The protein belongs to the adenylosuccinate synthetase family. As to quaternary structure, homodimer. Mg(2+) is required as a cofactor.

It is found in the cytoplasm. It catalyses the reaction IMP + L-aspartate + GTP = N(6)-(1,2-dicarboxyethyl)-AMP + GDP + phosphate + 2 H(+). Its pathway is purine metabolism; AMP biosynthesis via de novo pathway; AMP from IMP: step 1/2. Functionally, plays an important role in the de novo pathway and in the salvage pathway of purine nucleotide biosynthesis. Catalyzes the first committed step in the biosynthesis of AMP from IMP. The polypeptide is Adenylosuccinate synthetase (Schistosoma mansoni (Blood fluke)).